Consider the following 469-residue polypeptide: Bifunctional protein GlmU (469 aa).

The interval 1–236 (MLNIKLNIVI…ISEINGINDC (236 aa)) is pyrophosphorylase. UDP-N-acetyl-alpha-D-glucosamine is bound by residues 11–14 (LAAG), Lys-25, Gln-83, 88–89 (GT), 110–112 (YGD), Gly-147, Glu-161, Asn-176, and Asn-234. Asp-112 serves as a coordination point for Mg(2+). Residue Asn-234 participates in Mg(2+) binding. A linker region spans residues 237–257 (AQLANLERLYQKEQAESLLRI). Residues 258-469 (GVIIADPNRF…KKKIRYNIIY (212 aa)) are N-acetyltransferase. UDP-N-acetyl-alpha-D-glucosamine is bound by residues Arg-340 and Lys-358. His-370 acts as the Proton acceptor in catalysis. 2 residues coordinate UDP-N-acetyl-alpha-D-glucosamine: Tyr-373 and Asn-384. Acetyl-CoA is bound by residues Ala-387, 393-394 (NY), Ser-412, Ala-430, and Arg-447.

It in the N-terminal section; belongs to the N-acetylglucosamine-1-phosphate uridyltransferase family. In the C-terminal section; belongs to the transferase hexapeptide repeat family. In terms of assembly, homotrimer. Mg(2+) serves as cofactor.

Its subcellular location is the cytoplasm. It catalyses the reaction alpha-D-glucosamine 1-phosphate + acetyl-CoA = N-acetyl-alpha-D-glucosamine 1-phosphate + CoA + H(+). The catalysed reaction is N-acetyl-alpha-D-glucosamine 1-phosphate + UTP + H(+) = UDP-N-acetyl-alpha-D-glucosamine + diphosphate. It functions in the pathway nucleotide-sugar biosynthesis; UDP-N-acetyl-alpha-D-glucosamine biosynthesis; N-acetyl-alpha-D-glucosamine 1-phosphate from alpha-D-glucosamine 6-phosphate (route II): step 2/2. Its pathway is nucleotide-sugar biosynthesis; UDP-N-acetyl-alpha-D-glucosamine biosynthesis; UDP-N-acetyl-alpha-D-glucosamine from N-acetyl-alpha-D-glucosamine 1-phosphate: step 1/1. The protein operates within bacterial outer membrane biogenesis; LPS lipid A biosynthesis. Its function is as follows. Catalyzes the last two sequential reactions in the de novo biosynthetic pathway for UDP-N-acetylglucosamine (UDP-GlcNAc). The C-terminal domain catalyzes the transfer of acetyl group from acetyl coenzyme A to glucosamine-1-phosphate (GlcN-1-P) to produce N-acetylglucosamine-1-phosphate (GlcNAc-1-P), which is converted into UDP-GlcNAc by the transfer of uridine 5-monophosphate (from uridine 5-triphosphate), a reaction catalyzed by the N-terminal domain. The polypeptide is Bifunctional protein GlmU (Baumannia cicadellinicola subsp. Homalodisca coagulata).